The primary structure comprises 96 residues: Large ribosomal subunit protein bL28 (96 aa).

The protein belongs to the bacterial ribosomal protein bL28 family.

This chain is Large ribosomal subunit protein bL28, found in Leptospira biflexa serovar Patoc (strain Patoc 1 / Ames).